A 478-amino-acid polypeptide reads, in one-letter code: MASAMAGAGPAPGLPVAGGPVVPGPGVGIPGKSGEERLKEMEAEMALFEQEVLGAPVTGIPTAVPAVPTVEAMQVPPAPVIRPIIATNTYQQVQQTLEARAAAAATVVPPMVGGPPFVGPVGFGPADRSHLDSPEAREAMFLRRAAVAPQRAPILRPAFVPHVLQRADSALSSAAGGPRPMALRPPHQALVGPPLPGPPGPPMMLPPMARAPGPPLGSMAALRPPLEEPAAPRDLGLGLGLGLKEKEEAVVAAAAGLEEASAAVAVGAGGAPAGPAVIGPSLPLALAMPLPEPEPLPLPLEVVRGLLPPLRIPELLSLRPRPRPPRPEPPPGLMALEVPEPLGEDKKKGKPEKLKRCIRTAAGSSWEDPSLLEWDADDFRIFCGDLGNEVNDDILARAFSRFPSFLKAKVIRDKRTGKTKGYGFVSFKDPSDYVRAMREMNGKYVGSRPIKLRKSMWKDRNLDVVRKKQKEKKKLGLR.

The segment covering 1–20 (MASAMAGAGPAPGLPVAGGP) has biased composition (low complexity). The segment at 1–33 (MASAMAGAGPAPGLPVAGGPVVPGPGVGIPGKS) is disordered. Position 2 is an N-acetylalanine (Ala-2). Ser-133 is modified (phosphoserine). Arg-151, Arg-156, Arg-166, and Arg-179 each carry asymmetric dimethylarginine. Disordered stretches follow at residues 171-209 (LSSAAGGPRPMALRPPHQALVGPPLPGPPGPPMMLPPMA) and 317-354 (SLRPRPRPPRPEPPPGLMALEVPEPLGEDKKKGKPEKL). Residues 193–205 (PPLPGPPGPPMML) show a composition bias toward pro residues. Positions 234-478 (DLGLGLGLGL…QKEKKKLGLR (245 aa)) are necessary for interaction with HNRNPK. A compositionally biased stretch (basic and acidic residues) spans 343–354 (GEDKKKGKPEKL). The RRM domain occupies 379–457 (FRIFCGDLGN…RPIKLRKSMW (79 aa)).

It belongs to the RRM RBM42 family. As to quaternary structure, interacts with HNRNPK.

It is found in the nucleus. It localises to the cytoplasm. Functionally, binds (via the RRM domain) to the 3' untranslated region (UTR) of p21 mRNA. The polypeptide is RNA-binding protein 42 (Rbm42) (Rattus norvegicus (Rat)).